A 361-amino-acid chain; its full sequence is Holliday junction branch migration complex subunit RuvB (361 aa).

2 stretches are compositionally biased toward basic and acidic residues: residues 1 to 13 (MSDV…KLPE) and 33 to 43 (QGEHDIERSLR). Residues 1-43 (MSDVERTEFKLPEGMDLSSPPQRNQDVDAAEQQGEHDIERSLR) form a disordered region. The segment at 2 to 203 (SDVERTEFKL…FGFTAQMEYY (202 aa)) is large ATPase domain (RuvB-L). ATP is bound by residues L42, R43, G84, K87, T88, T89, 150–152 (EDF), R193, Y203, and R240. T88 provides a ligand contact to Mg(2+). A small ATPAse domain (RuvB-S) region spans residues 204–274 (DTEDLTRVIS…AAQAALRVFD (71 aa)). The head domain (RuvB-H) stretch occupies residues 277-361 (ERGLDRLDRA…PEGAIGGTLF (85 aa)). DNA contacts are provided by R332 and R337.

The protein belongs to the RuvB family. Homohexamer. Forms an RuvA(8)-RuvB(12)-Holliday junction (HJ) complex. HJ DNA is sandwiched between 2 RuvA tetramers; dsDNA enters through RuvA and exits via RuvB. An RuvB hexamer assembles on each DNA strand where it exits the tetramer. Each RuvB hexamer is contacted by two RuvA subunits (via domain III) on 2 adjacent RuvB subunits; this complex drives branch migration. In the full resolvosome a probable DNA-RuvA(4)-RuvB(12)-RuvC(2) complex forms which resolves the HJ.

The protein resides in the cytoplasm. It catalyses the reaction ATP + H2O = ADP + phosphate + H(+). Functionally, the RuvA-RuvB-RuvC complex processes Holliday junction (HJ) DNA during genetic recombination and DNA repair, while the RuvA-RuvB complex plays an important role in the rescue of blocked DNA replication forks via replication fork reversal (RFR). RuvA specifically binds to HJ cruciform DNA, conferring on it an open structure. The RuvB hexamer acts as an ATP-dependent pump, pulling dsDNA into and through the RuvAB complex. RuvB forms 2 homohexamers on either side of HJ DNA bound by 1 or 2 RuvA tetramers; 4 subunits per hexamer contact DNA at a time. Coordinated motions by a converter formed by DNA-disengaged RuvB subunits stimulates ATP hydrolysis and nucleotide exchange. Immobilization of the converter enables RuvB to convert the ATP-contained energy into a lever motion, pulling 2 nucleotides of DNA out of the RuvA tetramer per ATP hydrolyzed, thus driving DNA branch migration. The RuvB motors rotate together with the DNA substrate, which together with the progressing nucleotide cycle form the mechanistic basis for DNA recombination by continuous HJ branch migration. Branch migration allows RuvC to scan DNA until it finds its consensus sequence, where it cleaves and resolves cruciform DNA. In Corynebacterium aurimucosum (strain ATCC 700975 / DSM 44827 / CIP 107346 / CN-1) (Corynebacterium nigricans), this protein is Holliday junction branch migration complex subunit RuvB.